A 441-amino-acid polypeptide reads, in one-letter code: Xylose isomerase (441 aa).

Active-site residues include H100 and D103. Mg(2+) is bound by residues E231, E267, H270, D295, D306, D308, and D338.

This sequence belongs to the xylose isomerase family. In terms of assembly, homotetramer. Mg(2+) serves as cofactor.

The protein resides in the cytoplasm. It carries out the reaction alpha-D-xylose = alpha-D-xylulofuranose. The protein is Xylose isomerase of Paraburkholderia phymatum (strain DSM 17167 / CIP 108236 / LMG 21445 / STM815) (Burkholderia phymatum).